The primary structure comprises 607 residues: uncharacterized protein (607 aa).

A DNA-binding region (zn(2)-C6 fungal-type) is located at residues 16 to 44 (CTVCRKRKLKCDGNKPCGRCIRLNTPKEC).

The protein localises to the nucleus. This is an uncharacterized protein from Saccharomyces cerevisiae (strain ATCC 204508 / S288c) (Baker's yeast).